A 510-amino-acid chain; its full sequence is NAD(P)H-quinone oxidoreductase subunit 2 B, chloroplastic (510 aa).

13 consecutive transmembrane segments (helical) span residues 24-44, 57-77, 99-119, 124-144, 149-169, 183-203, 227-247, 295-315, 323-343, 354-374, 395-415, 418-438, and 484-504; these read LLFFDGSLIFPECILIFGLIL, IPWLYFISSTSLVMSITALLF, IFQFLILLCSTLCIPLSVEYI, MAITEFLLFVLTATIGGMFLC, LITIFVAPECFSLCSYLLSGY, YLLMGGASSSILVHGFSWLYG, PGISIALIFITVGIGFKLSPA, WHLLLEILAILSMILGNLIAI, MLAYSSIGQIGYVIIGIIVGD, YMLFYISMNLGTFACIVLFGL, ALSLALCLLSLGGLPPLAGFF, LYLFWCGWQAGLYFLVLIGLL, and MIVCVIASTIPGISMNPIIAI.

Belongs to the complex I subunit 2 family. As to quaternary structure, NDH is composed of at least 16 different subunits, 5 of which are encoded in the nucleus.

It localises to the plastid. It is found in the chloroplast thylakoid membrane. The enzyme catalyses a plastoquinone + NADH + (n+1) H(+)(in) = a plastoquinol + NAD(+) + n H(+)(out). It catalyses the reaction a plastoquinone + NADPH + (n+1) H(+)(in) = a plastoquinol + NADP(+) + n H(+)(out). Functionally, NDH shuttles electrons from NAD(P)H:plastoquinone, via FMN and iron-sulfur (Fe-S) centers, to quinones in the photosynthetic chain and possibly in a chloroplast respiratory chain. The immediate electron acceptor for the enzyme in this species is believed to be plastoquinone. Couples the redox reaction to proton translocation, and thus conserves the redox energy in a proton gradient. The protein is NAD(P)H-quinone oxidoreductase subunit 2 B, chloroplastic of Guizotia abyssinica (Niger).